We begin with the raw amino-acid sequence, 589 residues long: Putative adenine deaminase BC_3012 (589 aa).

The protein belongs to the metallo-dependent hydrolases superfamily. Adenine deaminase family.

It carries out the reaction adenine + H2O + H(+) = hypoxanthine + NH4(+). The polypeptide is Putative adenine deaminase BC_3012 (Bacillus cereus (strain ATCC 14579 / DSM 31 / CCUG 7414 / JCM 2152 / NBRC 15305 / NCIMB 9373 / NCTC 2599 / NRRL B-3711)).